Consider the following 63-residue polypeptide: Trypsin inhibitor 5 (63 aa).

A signal peptide spans 1–21; that stretch reads MASVAESSGVVEVIELISDGG. The propeptide occupies 22–34; the sequence is NDLPRKIMSGRHG. Disulfide bonds link Cys-37–Cys-54, Cys-44–Cys-56, and Cys-50–Cys-62.

It belongs to the protease inhibitor I7 (squash-type serine protease inhibitor) family.

Its subcellular location is the secreted. Inhibits trypsin. This chain is Trypsin inhibitor 5, found in Luffa aegyptiaca (Sponge gourd).